The primary structure comprises 139 residues: ATP synthase epsilon chain (139 aa).

Belongs to the ATPase epsilon chain family. As to quaternary structure, F-type ATPases have 2 components, CF(1) - the catalytic core - and CF(0) - the membrane proton channel. CF(1) has five subunits: alpha(3), beta(3), gamma(1), delta(1), epsilon(1). CF(0) has three main subunits: a, b and c.

The protein localises to the cell inner membrane. Functionally, produces ATP from ADP in the presence of a proton gradient across the membrane. The protein is ATP synthase epsilon chain of Pseudomonas putida (strain ATCC 47054 / DSM 6125 / CFBP 8728 / NCIMB 11950 / KT2440).